The following is a 630-amino-acid chain: Probable potassium transport system protein Kup (630 aa).

12 consecutive transmembrane segments (helical) span residues 17-37 (LAIA…LYSL), 51-71 (PSAI…VVGI), 105-125 (ITGL…GDAV), 144-164 (PQLS…LFWI), 175-195 (LFGP…IYHI), 218-238 (VLLA…AEAL), 255-275 (YVLV…LLLL), 283-303 (PFFL…STVA), 344-364 (IYVP…VIGF), 374-394 (YGIA…VVMV), 402-422 (LLVA…FGAN), and 428-448 (QGGW…MTWY).

Belongs to the HAK/KUP transporter (TC 2.A.72) family.

It localises to the cell inner membrane. The enzyme catalyses K(+)(in) + H(+)(in) = K(+)(out) + H(+)(out). Transport of potassium into the cell. Likely operates as a K(+):H(+) symporter. This is Probable potassium transport system protein Kup from Burkholderia pseudomallei (strain K96243).